The following is a 273-amino-acid chain: Large ribosomal subunit protein uL2 (273 aa).

Residues 221–263 (RGTAMNPVDHPHGGGEGRNFGKHPVTPWGVQTKGKKTRHNKRT) form a disordered region. Positions 253–263 (KGKKTRHNKRT) are enriched in basic residues.

Belongs to the universal ribosomal protein uL2 family. Part of the 50S ribosomal subunit. Forms a bridge to the 30S subunit in the 70S ribosome.

In terms of biological role, one of the primary rRNA binding proteins. Required for association of the 30S and 50S subunits to form the 70S ribosome, for tRNA binding and peptide bond formation. It has been suggested to have peptidyltransferase activity; this is somewhat controversial. Makes several contacts with the 16S rRNA in the 70S ribosome. This is Large ribosomal subunit protein uL2 from Histophilus somni (strain 129Pt) (Haemophilus somnus).